We begin with the raw amino-acid sequence, 354 residues long: Probable tartrate dehydrogenase/decarboxylase (354 aa).

Mn(2+) is bound by residues D221, D245, and D249.

The protein belongs to the isocitrate and isopropylmalate dehydrogenases family. It depends on Mg(2+) as a cofactor. The cofactor is Mn(2+). Requires K(+) as cofactor.

It carries out the reaction tartrate + NAD(+) = 2-hydroxy-3-oxosuccinate + NADH + H(+). It catalyses the reaction (2R,3S)-tartrate + NAD(+) = 2-hydroxy-3-oxosuccinate + NADH + H(+). The enzyme catalyses (2R,3R)-tartrate + NAD(+) = 2-hydroxy-3-oxosuccinate + NADH + H(+). The catalysed reaction is (2R,3R)-tartrate + H(+) = (R)-glycerate + CO2. It carries out the reaction (R)-malate + NAD(+) = pyruvate + CO2 + NADH. In terms of biological role, has multiple catalytic activities. Apart from catalyzing the oxidation of (+)-tartrate to oxaloglycolate, also converts meso-tartrate to D-glycerate and catalyzes the oxidative decarboxylation of D-malate to pyruvate. This chain is Probable tartrate dehydrogenase/decarboxylase (ycsA), found in Bacillus subtilis (strain 168).